The primary structure comprises 1479 residues: Chromosome partition protein MukB (1479 aa).

34-41 (GGNGAGKS) provides a ligand contact to ATP. Coiled coils occupy residues 337–418 (LNLV…QYQQ), 511–603 (QAER…RAPV), 780–810 (RAAR…DVQK), 847–1116 (ELDR…AKAG), and 1206–1265 (DDPV…LQAV). The segment at 666–783 (PGGSEDPRLN…EVPLFGRAAR (118 aa)) is flexible hinge.

The protein belongs to the SMC family. MukB subfamily. Homodimerization via its hinge domain. Binds to DNA via its C-terminal region. Interacts, and probably forms a ternary complex, with MukE and MukF via its C-terminal region. The complex formation is stimulated by calcium or magnesium. Interacts with tubulin-related protein FtsZ.

The protein resides in the cytoplasm. It localises to the nucleoid. Plays a central role in chromosome condensation, segregation and cell cycle progression. Functions as a homodimer, which is essential for chromosome partition. Involved in negative DNA supercoiling in vivo, and by this means organize and compact chromosomes. May achieve or facilitate chromosome segregation by condensation DNA from both sides of a centrally located replisome during cell division. This Pectobacterium carotovorum subsp. carotovorum (strain PC1) protein is Chromosome partition protein MukB.